The sequence spans 459 residues: ATP synthase subunit beta (459 aa).

148-155 (GGAGVGKT) contributes to the ATP binding site.

This sequence belongs to the ATPase alpha/beta chains family. F-type ATPases have 2 components, CF(1) - the catalytic core - and CF(0) - the membrane proton channel. CF(1) has five subunits: alpha(3), beta(3), gamma(1), delta(1), epsilon(1). CF(0) has three main subunits: a(1), b(2) and c(9-12). The alpha and beta chains form an alternating ring which encloses part of the gamma chain. CF(1) is attached to CF(0) by a central stalk formed by the gamma and epsilon chains, while a peripheral stalk is formed by the delta and b chains.

The protein localises to the cell inner membrane. It carries out the reaction ATP + H2O + 4 H(+)(in) = ADP + phosphate + 5 H(+)(out). Its function is as follows. Produces ATP from ADP in the presence of a proton gradient across the membrane. The catalytic sites are hosted primarily by the beta subunits. This is ATP synthase subunit beta from Ruthia magnifica subsp. Calyptogena magnifica.